Reading from the N-terminus, the 336-residue chain is Cytochrome P450 monooxygenase lcsN (336 aa).

Cys-271 lines the heme pocket.

It belongs to the cytochrome P450 family. Heme is required as a cofactor.

It functions in the pathway secondary metabolite biosynthesis. Functionally, cytochrome P450 monooxygenase; part of the gene cluster that mediates the biosynthesis of the lipopeptide antibiotics leucinostatins that show extensive biological activities, including antimalarial, antiviral, antibacterial, antifungal, and antitumor activities, as well as phytotoxic. Leucinostatin A contains nine amino acid residues, including the unusual amino acid 4-methyl-L-proline (MePro), 2-amino-6-hydroxy-4-methyl-8-oxodecanoic acid (AHyMeOA), 3-hydroxyleucine (HyLeu), alpha-aminoisobutyric acid (AIB), beta-Ala, a 4-methylhex-2-enoic acid at the N-terminus as well as a N1,N1-dimethylpropane-1,2-diamine (DPD) at the C-terminus. The biosynthesis of leucinostatins is probably initiated with the assembly of 4-methylhex-2-enoic acid by a reducing PKS. Two reducing polyketide synthases, lcsB and lcsC, have been identified in the cluster and it is not clear which is the one that assembles 4-methylhex-2-enoic acid since both contain KS, AT, DH, cMT, ER, KR and ACP domains. The polyketide residue might be transferred to the NRPS lcsA, mediated by two additional enzymes, the acyl-CoA ligase lcsD and the thioesterase lcsE. The linear polyketide carboxylic acid, which is released from PKS, is converted to a CoA thioester by lcsD, and then lcsE hydrolyzes the thiol bond and shuttles the polyketide intermediate to lcsA. The C domain of the first module catalyzed the condensation of 4-methylhex-2-enoic acid and MePro carried by domain A1, followed by successive condensations of nine amino acids to trigger the elongation of the linear peptide. A5 and A6 domains of lcsA are proposed to incorporate leucine, A2 AHyMeOA, and A3 incorporates HyLeu. A4, A7 and A8 incorporate AIB. The AHyMeOA in leucinostatin A activated by the A2 might be produced by the second PKS (lcsB or lcsC) present within the cluster. The MePro is probably produced via leucine cyclization and may originate from a separate pathway, independent of the cluster. Another nonproteinogenic amino acid, beta-Ala, could be produced by an aspartic acid decarboxylase also localized outside of the cluster. Two candidates are VFPBJ_01400 and VFPBJ_10476. The final peptide scaffold may be released by the NAD(P)H-dependent thioester reductase (TE) at the C-terminal region of lcsA. Transamination of the lcsA product by the transaminase lcsP may produce DPD at the C-terminus. Further hydroxylation steps performed alternatively by the cytochrome P450 monooxygenases lcsI, lcsK and lcsN then yield the non-methylated leucinostatins precursor. It is also possible that leucines can be hydroxylated prior to their incorporation into the peptide. Varying extents of methylation then lead to the formation of leucinostatins A and B. The chain is Cytochrome P450 monooxygenase lcsN from Purpureocillium lilacinum (Paecilomyces lilacinus).